Reading from the N-terminus, the 365-residue chain is DNA replication and repair protein RecF (365 aa).

Position 30–37 (30–37) interacts with ATP; the sequence is GLNGSGKT.

The protein belongs to the RecF family.

It is found in the cytoplasm. The RecF protein is involved in DNA metabolism; it is required for DNA replication and normal SOS inducibility. RecF binds preferentially to single-stranded, linear DNA. It also seems to bind ATP. This Cellvibrio japonicus (strain Ueda107) (Pseudomonas fluorescens subsp. cellulosa) protein is DNA replication and repair protein RecF.